The primary structure comprises 737 residues: Glycogen [starch] synthase, muscle (737 aa).

Residue Ser8 is modified to Phosphoserine; by AMPK and PKA. The residue at position 11 (Ser11) is a Phosphoserine. Lys39 provides a ligand contact to UDP. 2 residues coordinate UDP-alpha-D-glucose: His205 and Arg211. His291, Glu292, Gln294, His297, and Lys301 together coordinate alpha-D-glucose 6-phosphate. Arg331 contributes to the UDP binding site. Arg331 provides a ligand contact to UDP-alpha-D-glucose. The residue at position 412 (Ser412) is a Phosphoserine. His501 contributes to the alpha-D-glucose 6-phosphate binding site. 3 residues coordinate UDP-alpha-D-glucose: Glu510, Trp512, and Gly513. Thr515 contributes to the UDP binding site. 2 residues coordinate alpha-D-glucose 6-phosphate: Arg582 and Arg586. The disordered stretch occupies residues 634–737 (YRYPRPASVP…PTSSLGEERN (104 aa)). Ser641 carries the phosphoserine; by DYRK2, GSK3-alpha, GSK3-beta and PASK modification. Phosphoserine; by GSK3-alpha and GSK3-beta occurs at positions 645 and 649. A Phosphoserine modification is found at Ser652. Ser653 is modified (phosphoserine; by GSK3-alpha and GSK3-beta). Ser657 bears the Phosphoserine; by CK2 mark. Residues 658-681 (EDEEDPRNGPLEEDGERYDEDEEA) are compositionally biased toward acidic residues. A compositionally biased stretch (basic and acidic residues) spans 682-695 (AKDRRNIRAPEWPR). Ser698 carries the post-translational modification Phosphoserine. Polar residues predominate over residues 698–714 (SCTSSTSGSKRNSVDTA). Position 700 is a phosphothreonine (Thr700). At Ser710 the chain carries Phosphoserine. Residues 715–737 (TSSSLSTPSEPLSPTSSLGEERN) are compositionally biased toward low complexity. Thr721 carries the post-translational modification Phosphothreonine. Phosphoserine is present on residues Ser727 and Ser731.

It belongs to the glycosyltransferase 3 family. As to quaternary structure, part of the GYS1-GYG1 complex, a heterooctamer composed of a tetramer of GYS1 and 2 dimers of GYG1, where each GYS1 protomer binds to one GYG1 subunit (via GYG1 C-terminus); the GYS1 tetramer may dissociate from GYG1 dimers to continue glycogen polymerization on its own. Phosphorylation at Ser-8 by AMPK inactivates the enzyme activity. Primed phosphorylation at Ser-657 (site 5) by CSNK2A1 and CSNK2A2 is required for inhibitory phosphorylation at Ser-641 (site 3a), Ser-645 (site 3b), Ser-649 (site 3c) and Ser-653 (site 4) by GSK3A an GSK3B. Phosphorylated at Ser-641 by PASK, leading to inactivation; phosphorylation by PASK is inhibited by glycogen. Phosphorylated at Ser-641 by DYRK2, leading to inactivation. Dephosphorylation at Ser-641 and Ser-645 by PP1 activates the enzyme.

It carries out the reaction [(1-&gt;4)-alpha-D-glucosyl](n) + UDP-alpha-D-glucose = [(1-&gt;4)-alpha-D-glucosyl](n+1) + UDP + H(+). The protein operates within glycan biosynthesis; glycogen biosynthesis. Its activity is regulated as follows. Allosteric activation by glucose-6-phosphate. Phosphorylation reduces the activity towards UDP-glucose. When in the non-phosphorylated state, glycogen synthase does not require glucose-6-phosphate as an allosteric activator; when phosphorylated it does. Functionally, glycogen synthase participates in the glycogen biosynthetic process along with glycogenin and glycogen branching enzyme. Extends the primer composed of a few glucose units formed by glycogenin by adding new glucose units to it. In this context, glycogen synthase transfers the glycosyl residue from UDP-Glc to the non-reducing end of alpha-1,4-glucan. The chain is Glycogen [starch] synthase, muscle (GYS1) from Pongo abelii (Sumatran orangutan).